We begin with the raw amino-acid sequence, 455 residues long: Bifunctional protein GlmU (455 aa).

The pyrophosphorylase stretch occupies residues 1–226 (MGLSVVILAA…EFEILGVNDR (226 aa)). Residues 8 to 11 (LAAG), Lys-22, Gln-73, 78 to 79 (GT), 99 to 101 (YGD), Gly-136, Glu-151, Asn-166, and Asn-224 contribute to the UDP-N-acetyl-alpha-D-glucosamine site. Asp-101 is a binding site for Mg(2+). Mg(2+) is bound at residue Asn-224. The tract at residues 227-247 (TQLASLERVWQRNVAEKIMAK) is linker. Residues 248–455 (GVSIADPNRF…WQRSVKKTDK (208 aa)) are N-acetyltransferase. 2 residues coordinate UDP-N-acetyl-alpha-D-glucosamine: Arg-330 and Lys-348. His-360 functions as the Proton acceptor in the catalytic mechanism. UDP-N-acetyl-alpha-D-glucosamine-binding residues include Tyr-363 and Asn-374. Acetyl-CoA-binding positions include Ala-377, 383–384 (NY), Ser-402, Ala-420, and Arg-437.

The protein in the N-terminal section; belongs to the N-acetylglucosamine-1-phosphate uridyltransferase family. This sequence in the C-terminal section; belongs to the transferase hexapeptide repeat family. Homotrimer. Mg(2+) serves as cofactor.

The protein localises to the cytoplasm. It catalyses the reaction alpha-D-glucosamine 1-phosphate + acetyl-CoA = N-acetyl-alpha-D-glucosamine 1-phosphate + CoA + H(+). The catalysed reaction is N-acetyl-alpha-D-glucosamine 1-phosphate + UTP + H(+) = UDP-N-acetyl-alpha-D-glucosamine + diphosphate. The protein operates within nucleotide-sugar biosynthesis; UDP-N-acetyl-alpha-D-glucosamine biosynthesis; N-acetyl-alpha-D-glucosamine 1-phosphate from alpha-D-glucosamine 6-phosphate (route II): step 2/2. It functions in the pathway nucleotide-sugar biosynthesis; UDP-N-acetyl-alpha-D-glucosamine biosynthesis; UDP-N-acetyl-alpha-D-glucosamine from N-acetyl-alpha-D-glucosamine 1-phosphate: step 1/1. Its pathway is bacterial outer membrane biogenesis; LPS lipid A biosynthesis. Catalyzes the last two sequential reactions in the de novo biosynthetic pathway for UDP-N-acetylglucosamine (UDP-GlcNAc). The C-terminal domain catalyzes the transfer of acetyl group from acetyl coenzyme A to glucosamine-1-phosphate (GlcN-1-P) to produce N-acetylglucosamine-1-phosphate (GlcNAc-1-P), which is converted into UDP-GlcNAc by the transfer of uridine 5-monophosphate (from uridine 5-triphosphate), a reaction catalyzed by the N-terminal domain. The protein is Bifunctional protein GlmU of Francisella tularensis subsp. tularensis (strain SCHU S4 / Schu 4).